The sequence spans 313 residues: Tyrosine recombinase XerC (313 aa).

The Core-binding (CB) domain occupies 11 to 97 (NSLQKPLERF…SLRSFFDFLI (87 aa)). The region spanning 118–298 (PLPKNLDVDE…DFQHLAQAYD (181 aa)) is the Tyr recombinase domain. Residues Arg-157, Lys-181, His-250, Arg-253, and His-276 contribute to the active site. Catalysis depends on Tyr-285, which acts as the O-(3'-phospho-DNA)-tyrosine intermediate.

Belongs to the 'phage' integrase family. XerC subfamily. Forms a cyclic heterotetrameric complex composed of two molecules of XerC and two molecules of XerD.

It is found in the cytoplasm. Its function is as follows. Site-specific tyrosine recombinase, which acts by catalyzing the cutting and rejoining of the recombining DNA molecules. The XerC-XerD complex is essential to convert dimers of the bacterial chromosome into monomers to permit their segregation at cell division. It also contributes to the segregational stability of plasmids. The sequence is that of Tyrosine recombinase XerC from Vibrio campbellii (strain ATCC BAA-1116).